The primary structure comprises 148 residues: Hydrogenase expression/formation protein HoxO (148 aa).

The disordered stretch occupies residues 128–148; the sequence is IPVLSPESGTPSCSPMETSES. A compositionally biased stretch (polar residues) spans 134 to 148; the sequence is ESGTPSCSPMETSES.

It belongs to the HupG/HyaE family.

This chain is Hydrogenase expression/formation protein HoxO (hoxO), found in Azotobacter vinelandii.